The sequence spans 152 residues: Small ribosomal subunit protein bS6 (152 aa).

Positions 96-152 (HEEGPSAMLQKRDRDDRGPREGGDRGPRREFGDRPPRRDGDFQRGPRPDRAPREDRA) are disordered.

This sequence belongs to the bacterial ribosomal protein bS6 family.

Binds together with bS18 to 16S ribosomal RNA. In Rhizobium etli (strain ATCC 51251 / DSM 11541 / JCM 21823 / NBRC 15573 / CFN 42), this protein is Small ribosomal subunit protein bS6.